The primary structure comprises 150 residues: Large ribosomal subunit protein bL9 (150 aa).

Belongs to the bacterial ribosomal protein bL9 family.

Functionally, binds to the 23S rRNA. The sequence is that of Large ribosomal subunit protein bL9 from Corynebacterium diphtheriae (strain ATCC 700971 / NCTC 13129 / Biotype gravis).